Reading from the N-terminus, the 671-residue chain is Polyadenylate-binding protein 8 (671 aa).

4 RRM domains span residues 45-123 (TSLY…YSVR), 133-210 (GNIF…PFVH), 224-301 (TNVY…KAQK), and 327-404 (SNLY…LAQR). The disordered stretch occupies residues 467–526 (LVPGMRPGGSPMPNFFMPMMQQGQQQQQQQQQQQRPGGGRRGALPQPQQPSPMMQQQMHP). Composition is skewed to low complexity over residues 483–501 (MPMMQQGQQQQQQQQQQQR) and 508–525 (GALPQPQQPSPMMQQQMH). The 78-residue stretch at 573 to 650 (PIVALATRLA…AMDVLRSVAQ (78 aa)) folds into the PABC domain.

This sequence belongs to the polyadenylate-binding protein type-1 family. Interacts with ERD15/CID1. Interacts with Turnip mosaic virus (TuMV) VPg-Pro and RNA-dependent RNA polymerase (RdRp). Expressed predominantly in immature flowers.

The protein localises to the cytoplasm. The protein resides in the nucleus. Its function is as follows. Binds the poly(A) tail of mRNA. Appears to be an important mediator of the multiple roles of the poly(A) tail in mRNA biogenesis, stability and translation. During infection with potyvirus TuMV, acts as a potential integral component of the viral replicase complex that could play an important role in the regulation of potyviral RNA-dependent RNA polymerase (RdRp). The polypeptide is Polyadenylate-binding protein 8 (PAB8) (Arabidopsis thaliana (Mouse-ear cress)).